We begin with the raw amino-acid sequence, 323 residues long: Quinolinate synthase (323 aa).

Iminosuccinate is bound by residues H38 and S55. C100 provides a ligand contact to [4Fe-4S] cluster. Residues 126–128 (YIN) and S143 contribute to the iminosuccinate site. Position 186 (C186) interacts with [4Fe-4S] cluster. Iminosuccinate is bound by residues 212–214 (HPE) and T229. A [4Fe-4S] cluster-binding site is contributed by C279.

Belongs to the quinolinate synthase family. Type 2 subfamily. Requires [4Fe-4S] cluster as cofactor.

The protein localises to the cytoplasm. The enzyme catalyses iminosuccinate + dihydroxyacetone phosphate = quinolinate + phosphate + 2 H2O + H(+). It participates in cofactor biosynthesis; NAD(+) biosynthesis; quinolinate from iminoaspartate: step 1/1. Functionally, catalyzes the condensation of iminoaspartate with dihydroxyacetone phosphate to form quinolinate. This is Quinolinate synthase from Gloeothece citriformis (strain PCC 7424) (Cyanothece sp. (strain PCC 7424)).